The sequence spans 375 residues: Succinyl-diaminopimelate desuccinylase (375 aa).

His-66 contributes to the Zn(2+) binding site. Asp-68 is a catalytic residue. Asp-99 contacts Zn(2+). Glu-133 functions as the Proton acceptor in the catalytic mechanism. Residues Glu-134, Glu-162, and His-348 each coordinate Zn(2+).

The protein belongs to the peptidase M20A family. DapE subfamily. In terms of assembly, homodimer. It depends on Zn(2+) as a cofactor. The cofactor is Co(2+).

It carries out the reaction N-succinyl-(2S,6S)-2,6-diaminopimelate + H2O = (2S,6S)-2,6-diaminopimelate + succinate. Its pathway is amino-acid biosynthesis; L-lysine biosynthesis via DAP pathway; LL-2,6-diaminopimelate from (S)-tetrahydrodipicolinate (succinylase route): step 3/3. Catalyzes the hydrolysis of N-succinyl-L,L-diaminopimelic acid (SDAP), forming succinate and LL-2,6-diaminopimelate (DAP), an intermediate involved in the bacterial biosynthesis of lysine and meso-diaminopimelic acid, an essential component of bacterial cell walls. The chain is Succinyl-diaminopimelate desuccinylase from Aeromonas salmonicida (strain A449).